A 124-amino-acid chain; its full sequence is Large ribosomal subunit protein uL22 (124 aa).

The protein belongs to the universal ribosomal protein uL22 family. Part of the 50S ribosomal subunit.

In terms of biological role, this protein binds specifically to 23S rRNA; its binding is stimulated by other ribosomal proteins, e.g. L4, L17, and L20. It is important during the early stages of 50S assembly. It makes multiple contacts with different domains of the 23S rRNA in the assembled 50S subunit and ribosome. Functionally, the globular domain of the protein is located near the polypeptide exit tunnel on the outside of the subunit, while an extended beta-hairpin is found that lines the wall of the exit tunnel in the center of the 70S ribosome. The chain is Large ribosomal subunit protein uL22 from Macrococcus caseolyticus (strain JCSC5402) (Macrococcoides caseolyticum).